Here is a 94-residue protein sequence, read N- to C-terminus: Large ribosomal subunit protein uL23 (94 aa).

The protein belongs to the universal ribosomal protein uL23 family. In terms of assembly, part of the 50S ribosomal subunit. Contacts protein L29, and trigger factor when it is bound to the ribosome.

One of the early assembly proteins it binds 23S rRNA. One of the proteins that surrounds the polypeptide exit tunnel on the outside of the ribosome. Forms the main docking site for trigger factor binding to the ribosome. This Roseiflexus sp. (strain RS-1) protein is Large ribosomal subunit protein uL23.